The primary structure comprises 123 residues: Large ribosomal subunit protein bL12 (123 aa).

Belongs to the bacterial ribosomal protein bL12 family. Homodimer. Part of the ribosomal stalk of the 50S ribosomal subunit. Forms a multimeric L10(L12)X complex, where L10 forms an elongated spine to which 2 to 4 L12 dimers bind in a sequential fashion. Binds GTP-bound translation factors.

In terms of biological role, forms part of the ribosomal stalk which helps the ribosome interact with GTP-bound translation factors. Is thus essential for accurate translation. This chain is Large ribosomal subunit protein bL12, found in Salmonella arizonae (strain ATCC BAA-731 / CDC346-86 / RSK2980).